The chain runs to 613 residues: Ribosome-associated molecular chaperone SSB1 (613 aa).

The nucleotide binding domain (NBD) stretch occupies residues 1–391 (MAEGVFPGAI…ILTGQSTSDE (391 aa)). ATP-binding positions include 16 to 18 (TTY), K73, 205 to 207 (GGT), 271 to 278 (ERAKRTLS), and G342. Positions 392–402 (TKDLLLLDVAP) are inter-domain linker. Positions 403-613 (LSLGVGMAGD…RAVTKAMSTR (211 aa)) are substrate binding domain (SBD). The tract at residues 516–612 (SEEIEQMVNQ…KRAVTKAMST (97 aa)) is lid domain (SBDalpha). The Nuclear export signal signature appears at 574–582 (VEAALADAF).

It belongs to the heat shock protein 70 family. Ssb-type Hsp70 subfamily. As to quaternary structure, binds to ribosomes. Binds close to the ribosomal tunnel exit via contacts with both ribosomal proteins and rRNA. Directly interacts with nascent polypeptides. This interaction is dependent on the ribosome-associated complex (RAC). Interacts with SSE1. Interacts with FES1.

The protein resides in the cytoplasm. It carries out the reaction ATP + H2O = ADP + phosphate + H(+). Its function is as follows. Ribosome-bound, Hsp70-type chaperone that assists in the cotranslational folding of newly synthesized proteins in the cytosol. Stimulates folding by interacting with nascent chains, binding to short, largely hydrophobic sequences exposed by unfolded proteins, thereby stabilizing longer, more slowly translated, and aggregation-prone nascent polypeptides and domains that cannot fold stably until fully synthesized. The Hsp70-protein substrate interaction depends on ATP-binding and on allosteric regulation between the NBD and the SBD. The ATP-bound state is characterized by a fast exchange rate of substrate (low affinity state), while in the ADP-bound state exchange is much slower (high affinity state). During the Hsp70 cycle, the chaperone switches between the ATP-bound state (open conformation) and the ADP-bound state (closed conformation) by major conformational rearrangements involving mainly the lid domain. Ssb cooperates with a specific Hsp40/Hsp70 co-chaperone termed the ribosome-associated complex (RAC), which stimulates the ATPase activity of the ribosome-associated pool of Ssbs and switches it to the high affinity substrate binding state. Hsp110 chaperone SSE1 and FES1 act as nucleotide exchange factors that cause substrate release. In Kluyveromyces marxianus (Yeast), this protein is Ribosome-associated molecular chaperone SSB1 (SSB1).